Here is a 289-residue protein sequence, read N- to C-terminus: Nucleotide-binding protein MS1718 (289 aa).

ATP is bound at residue 8–15 (GRSGAGKS). 56–59 (DIRN) contacts GTP.

The protein belongs to the RapZ-like family.

Displays ATPase and GTPase activities. This is Nucleotide-binding protein MS1718 from Mannheimia succiniciproducens (strain KCTC 0769BP / MBEL55E).